Reading from the N-terminus, the 544-residue chain is Transcription factor bHLH119 (544 aa).

Disordered regions lie at residues 12–59 (NGQV…QPPR) and 185–208 (VAST…PPSV). Over residues 15–29 (VVRTSQPQRPSSGKP) the composition is skewed to polar residues. Residues 50–59 (LPLPLLQPPR) are compositionally biased toward pro residues. Threonine 269 carries the post-translational modification Phosphothreonine. Residue serine 274 is modified to Phosphoserine. Disordered regions lie at residues 342 to 364 (QGTE…MHNL) and 522 to 544 (QPPL…STSK). The 50-residue stretch at 357–406 (RAADMHNLSERRRRERINERMKTLQELLPRCRKTDKVSMLEDVIEYVKSL) folds into the bHLH domain. Residues 522–535 (QPPLPLQGQPTSQP) are compositionally biased toward low complexity. Phosphoserine is present on residues serine 541 and serine 543.

Homodimer.

It is found in the nucleus. The protein is Transcription factor bHLH119 (BHLH119) of Arabidopsis thaliana (Mouse-ear cress).